The following is a 423-amino-acid chain: UDP-N-acetylglucosamine 1-carboxyvinyltransferase 2 (423 aa).

23–24 (KN) contributes to the phosphoenolpyruvate binding site. Residue R96 participates in UDP-N-acetyl-alpha-D-glucosamine binding. C120 (proton donor) is an active-site residue. Position 120 is a 2-(S-cysteinyl)pyruvic acid O-phosphothioketal (C120). Residues 125-129 (RPIDL), D309, and V331 contribute to the UDP-N-acetyl-alpha-D-glucosamine site.

The protein belongs to the EPSP synthase family. MurA subfamily.

The protein resides in the cytoplasm. The enzyme catalyses phosphoenolpyruvate + UDP-N-acetyl-alpha-D-glucosamine = UDP-N-acetyl-3-O-(1-carboxyvinyl)-alpha-D-glucosamine + phosphate. It participates in cell wall biogenesis; peptidoglycan biosynthesis. Functionally, cell wall formation. Adds enolpyruvyl to UDP-N-acetylglucosamine. This is UDP-N-acetylglucosamine 1-carboxyvinyltransferase 2 from Streptococcus agalactiae serotype Ia (strain ATCC 27591 / A909 / CDC SS700).